We begin with the raw amino-acid sequence, 198 residues long: Peroxiredoxin-2F, mitochondrial (198 aa).

The transit peptide at 1-27 (MASALLRKATVGGSAAAAAARWASRGL) directs the protein to the mitochondrion. Residues 34–198 (SDIVSAAPGV…SGAEVILDQI (165 aa)) enclose the Thioredoxin domain. Residue Cys86 is the Cysteine sulfenic acid (-SOH) intermediate of the active site.

It belongs to the peroxiredoxin family. Prx5 subfamily. As to quaternary structure, monomer.

The protein resides in the mitochondrion matrix. The enzyme catalyses [glutaredoxin]-dithiol + a hydroperoxide = [glutaredoxin]-disulfide + an alcohol + H2O. Its function is as follows. Thiol-specific peroxidase that catalyzes the reduction of hydrogen peroxide and organic hydroperoxides to water and alcohols, respectively. Plays a role in cell protection against oxidative stress by detoxifying peroxides. Reduces preferentially hydrogen peroxide rather than alkyl peroxides. May be involved in mitochondrial redox homeostasis. This is Peroxiredoxin-2F, mitochondrial (PRXIIF) from Oryza sativa subsp. japonica (Rice).